Here is a 503-residue protein sequence, read N- to C-terminus: Probable DNA double-strand break repair helicase HerA (503 aa).

Residues arginine 122, 131–136, and 478–479 contribute to the ATP site; these read GGGKSN and KI.

This sequence belongs to the HerA family.

It catalyses the reaction Couples ATP hydrolysis with the unwinding of duplex DNA at the replication fork by translocating in the 5'-3' direction. This creates two antiparallel DNA single strands (ssDNA). The leading ssDNA polymer is the template for DNA polymerase III holoenzyme which synthesizes a continuous strand.. It carries out the reaction ATP + H2O = ADP + phosphate + H(+). The enzyme catalyses Couples ATP hydrolysis with the unwinding of duplex DNA by translocating in the 3'-5' direction.. Involved in DNA double-strand break (DSB) repair. Probably acts with NurA to stimulate resection of the 5' strand and produce the long 3' single-strand that is required for RadA loading. Has DNA-dependent ATPase activity and DNA helicase activity. This chain is Probable DNA double-strand break repair helicase HerA, found in Methanocaldococcus jannaschii (strain ATCC 43067 / DSM 2661 / JAL-1 / JCM 10045 / NBRC 100440) (Methanococcus jannaschii).